The primary structure comprises 304 residues: UDP-N-acetylenolpyruvoylglucosamine reductase (304 aa).

Residues 33–198 (RVGGPVDILL…ITATFCFESG (166 aa)) enclose the FAD-binding PCMH-type domain. Residue Arg177 is part of the active site. Ser227 acts as the Proton donor in catalysis. Glu297 is an active-site residue.

It belongs to the MurB family. FAD is required as a cofactor.

Its subcellular location is the cytoplasm. It carries out the reaction UDP-N-acetyl-alpha-D-muramate + NADP(+) = UDP-N-acetyl-3-O-(1-carboxyvinyl)-alpha-D-glucosamine + NADPH + H(+). Its pathway is cell wall biogenesis; peptidoglycan biosynthesis. Cell wall formation. The chain is UDP-N-acetylenolpyruvoylglucosamine reductase from Clostridium botulinum (strain Eklund 17B / Type B).